A 197-amino-acid chain; its full sequence is 3-isopropylmalate dehydratase small subunit (197 aa).

The protein belongs to the LeuD family. LeuD type 1 subfamily. Heterodimer of LeuC and LeuD.

It carries out the reaction (2R,3S)-3-isopropylmalate = (2S)-2-isopropylmalate. The protein operates within amino-acid biosynthesis; L-leucine biosynthesis; L-leucine from 3-methyl-2-oxobutanoate: step 2/4. In terms of biological role, catalyzes the isomerization between 2-isopropylmalate and 3-isopropylmalate, via the formation of 2-isopropylmaleate. The chain is 3-isopropylmalate dehydratase small subunit from Streptococcus suis (strain 98HAH33).